Consider the following 331-residue polypeptide: Ornithine carbamoyltransferase (331 aa).

Residues 55 to 58 (STRT), Gln-82, Arg-106, and 133 to 136 (HPTQ) each bind carbamoyl phosphate. L-ornithine contacts are provided by residues Asn-166, Asp-230, and 234-235 (SM). Carbamoyl phosphate-binding positions include 272 to 273 (CL) and Arg-317.

This sequence belongs to the aspartate/ornithine carbamoyltransferase superfamily. OTCase family.

The protein resides in the cytoplasm. The catalysed reaction is carbamoyl phosphate + L-ornithine = L-citrulline + phosphate + H(+). It participates in amino-acid biosynthesis; L-arginine biosynthesis; L-arginine from L-ornithine and carbamoyl phosphate: step 1/3. In terms of biological role, reversibly catalyzes the transfer of the carbamoyl group from carbamoyl phosphate (CP) to the N(epsilon) atom of ornithine (ORN) to produce L-citrulline. This Neisseria meningitidis serogroup B (strain ATCC BAA-335 / MC58) protein is Ornithine carbamoyltransferase (argF).